A 51-amino-acid chain; its full sequence is Large ribosomal subunit protein bL33 (51 aa).

The interval 1-21 (MRDKIKLESGAGTGHFYTTTK) is disordered.

The protein belongs to the bacterial ribosomal protein bL33 family.

The protein is Large ribosomal subunit protein bL33 of Neisseria gonorrhoeae (strain ATCC 700825 / FA 1090).